The following is a 285-amino-acid chain: uncharacterized protein (285 aa).

It belongs to the methyltransferase superfamily.

This is an uncharacterized protein from Mycobacterium tuberculosis (strain CDC 1551 / Oshkosh).